The following is a 319-amino-acid chain: Molybdenum cofactor biosynthesis bifunctional protein (319 aa).

Positions 1 to 145 (MIDVGDKAVT…GKSGHWQRPA (145 aa)) are molybdenum cofactor biosynthesis protein C. Residues 61 to 63 (LCH) and 99 to 100 (ME) contribute to the substrate site. D114 is a catalytic residue. A molybdenum cofactor biosynthesis protein B region spans residues 146-319 (IAPDVAPTGA…KGADHGTVKG (174 aa)).

It in the N-terminal section; belongs to the MoaC family. The protein in the C-terminal section; belongs to the MoaB/Mog family.

It carries out the reaction (8S)-3',8-cyclo-7,8-dihydroguanosine 5'-triphosphate = cyclic pyranopterin phosphate + diphosphate. Its pathway is cofactor biosynthesis; molybdopterin biosynthesis. In terms of biological role, catalyzes the conversion of (8S)-3',8-cyclo-7,8-dihydroguanosine 5'-triphosphate to cyclic pyranopterin monophosphate (cPMP). The sequence is that of Molybdenum cofactor biosynthesis bifunctional protein (moaCB) from Synechococcus elongatus (strain ATCC 33912 / PCC 7942 / FACHB-805) (Anacystis nidulans R2).